The following is an 89-amino-acid chain: Glutamyl-tRNA(Gln) amidotransferase subunit C (89 aa).

This sequence belongs to the GatC family. As to quaternary structure, heterotrimer of A, B and C subunits.

The catalysed reaction is L-glutamyl-tRNA(Gln) + L-glutamine + ATP + H2O = L-glutaminyl-tRNA(Gln) + L-glutamate + ADP + phosphate + H(+). The enzyme catalyses L-aspartyl-tRNA(Asn) + L-glutamine + ATP + H2O = L-asparaginyl-tRNA(Asn) + L-glutamate + ADP + phosphate + 2 H(+). Allows the formation of correctly charged Asn-tRNA(Asn) or Gln-tRNA(Gln) through the transamidation of misacylated Asp-tRNA(Asn) or Glu-tRNA(Gln) in organisms which lack either or both of asparaginyl-tRNA or glutaminyl-tRNA synthetases. The reaction takes place in the presence of glutamine and ATP through an activated phospho-Asp-tRNA(Asn) or phospho-Glu-tRNA(Gln). This is Glutamyl-tRNA(Gln) amidotransferase subunit C from Thermus thermophilus (strain ATCC 27634 / DSM 579 / HB8).